A 682-amino-acid chain; its full sequence is Tail-specific protease (682 aa).

The first 22 residues, 1–22 (MNMFFRLTALAGLLAIAGQTFA), serve as a signal peptide directing secretion. Residues 238-322 (NTEMSLSLEG…SKVRLEILPA (85 aa)) enclose the PDZ domain. Catalysis depends on charge relay system residues serine 452, aspartate 463, and lysine 477. Positions 635–650 (GKPELKKLDDLPKDYQ) are enriched in basic and acidic residues. The disordered stretch occupies residues 635-654 (GKPELKKLDDLPKDYQEPDP).

Belongs to the peptidase S41A family.

Its subcellular location is the cell inner membrane. The catalysed reaction is The enzyme shows specific recognition of a C-terminal tripeptide, Xaa-Yaa-Zaa, in which Xaa is preferably Ala or Leu, Yaa is preferably Ala or Tyr, and Zaa is preferably Ala, but then cleaves at a variable distance from the C-terminus. A typical cleavage is -Ala-Ala-|-Arg-Ala-Ala-Lys-Glu-Asn-Tyr-Ala-Leu-Ala-Ala.. In terms of biological role, involved in the cleavage of a C-terminal peptide of 11 residues from the precursor form of penicillin-binding protein 3 (PBP3). May be involved in protection of the bacterium from thermal and osmotic stresses. In Escherichia coli (strain K12), this protein is Tail-specific protease (prc).